A 217-amino-acid polypeptide reads, in one-letter code: Cytidylate kinase (217 aa).

Gly-9–Ser-17 provides a ligand contact to ATP.

This sequence belongs to the cytidylate kinase family. Type 1 subfamily.

The protein resides in the cytoplasm. The catalysed reaction is CMP + ATP = CDP + ADP. It carries out the reaction dCMP + ATP = dCDP + ADP. The polypeptide is Cytidylate kinase (Mycoplasma genitalium (strain ATCC 33530 / DSM 19775 / NCTC 10195 / G37) (Mycoplasmoides genitalium)).